The following is a 298-amino-acid chain: UDP-N-acetylenolpyruvoylglucosamine reductase (298 aa).

Positions 27–191 (TGGEADVFVM…LDATFSLALE (165 aa)) constitute an FAD-binding PCMH-type domain. The active site involves R170. The active-site Proton donor is S220. E290 is an active-site residue.

This sequence belongs to the MurB family. FAD serves as cofactor.

The protein localises to the cytoplasm. The enzyme catalyses UDP-N-acetyl-alpha-D-muramate + NADP(+) = UDP-N-acetyl-3-O-(1-carboxyvinyl)-alpha-D-glucosamine + NADPH + H(+). The protein operates within cell wall biogenesis; peptidoglycan biosynthesis. Cell wall formation. This chain is UDP-N-acetylenolpyruvoylglucosamine reductase, found in Listeria monocytogenes serotype 4a (strain HCC23).